The chain runs to 165 residues: Phosphopantetheine adenylyltransferase (165 aa).

The protein belongs to the eukaryotic CoaD family.

The protein resides in the cytoplasm. The enzyme catalyses (R)-4'-phosphopantetheine + ATP + H(+) = 3'-dephospho-CoA + diphosphate. It participates in cofactor biosynthesis; coenzyme A biosynthesis. In terms of biological role, reversibly transfers an adenylyl group from ATP to 4'-phosphopantetheine, yielding dephospho-CoA (dPCoA) and pyrophosphate. The polypeptide is Phosphopantetheine adenylyltransferase (Thermococcus kodakarensis (strain ATCC BAA-918 / JCM 12380 / KOD1) (Pyrococcus kodakaraensis (strain KOD1))).